Here is a 130-residue protein sequence, read N- to C-terminus: Protachykinin-1 (130 aa).

An N-terminal signal peptide occupies residues 1–19 (MKILVAVAVFFLVSTQLSA). A propeptide spanning residues 20 to 56 (EEIGANDDLNYWSDWSDSDQIKEALPEPFEHILQRIA) is cleaved from the precursor. A methionine amide mark is found at Met68 and Met107.

The protein belongs to the tachykinin family. Post-translationally, the substance P form is cleaved at Pro-59 by the prolyl endopeptidase FAP (seprase) activity (in vitro). Substance P is also cleaved and degraded by Angiotensin-converting enzyme (ACE) and neprilysin (MME).

It localises to the secreted. In terms of biological role, tachykinins are active peptides which excite neurons, evoke behavioral responses, are potent vasodilators and secretagogues, and contract (directly or indirectly) many smooth muscles. This chain is Protachykinin-1 (TAC1), found in Mesocricetus auratus (Golden hamster).